Here is a 953-residue protein sequence, read N- to C-terminus: Translation initiation factor IF-2 (953 aa).

2 disordered regions span residues serine 48–alanine 248 and threonine 279–lysine 363. 3 stretches are compositionally biased toward basic and acidic residues: residues threonine 80–glutamine 89, phenylalanine 98–alanine 111, and glutamine 140–lysine 188. Polar residues predominate over residues arginine 191–serine 207. Basic and acidic residues predominate over residues arginine 229–alanine 248. The segment covering lysine 282–threonine 291 has biased composition (polar residues). Over residues alanine 300–lysine 317 the composition is skewed to basic and acidic residues. The segment covering serine 322–asparagine 338 has biased composition (low complexity). Over residues lysine 339–asparagine 348 the composition is skewed to basic residues. A tr-type G domain is found at glutamate 454–lysine 623. A G1 region spans residues glycine 463–threonine 470. Residue glycine 463–threonine 470 coordinates GTP. The interval glycine 488 to histidine 492 is G2. The interval aspartate 509 to glycine 512 is G3. GTP-binding positions include aspartate 509–histidine 513 and asparagine 563–aspartate 566. The interval asparagine 563 to aspartate 566 is G4. Residues serine 599–lysine 601 form a G5 region.

It belongs to the TRAFAC class translation factor GTPase superfamily. Classic translation factor GTPase family. IF-2 subfamily.

It localises to the cytoplasm. In terms of biological role, one of the essential components for the initiation of protein synthesis. Protects formylmethionyl-tRNA from spontaneous hydrolysis and promotes its binding to the 30S ribosomal subunits. Also involved in the hydrolysis of GTP during the formation of the 70S ribosomal complex. This chain is Translation initiation factor IF-2, found in Streptococcus pyogenes serotype M18 (strain MGAS8232).